Consider the following 299-residue polypeptide: Aliphatic sulfonates import ATP-binding protein SsuB (299 aa).

The region spanning leucine 36 to isoleucine 257 is the ABC transporter domain. Glycine 68–serine 75 serves as a coordination point for ATP.

This sequence belongs to the ABC transporter superfamily. Aliphatic sulfonates importer (TC 3.A.1.17.2) family. In terms of assembly, the complex is composed of two ATP-binding proteins (SsuB), two transmembrane proteins (SsuC) and a solute-binding protein (SsuA).

It localises to the cell inner membrane. It catalyses the reaction ATP + H2O + aliphatic sulfonate-[sulfonate-binding protein]Side 1 = ADP + phosphate + aliphatic sulfonateSide 2 + [sulfonate-binding protein]Side 1.. In terms of biological role, part of the ABC transporter complex SsuABC involved in aliphatic sulfonates import. Responsible for energy coupling to the transport system. The chain is Aliphatic sulfonates import ATP-binding protein SsuB from Cupriavidus pinatubonensis (strain JMP 134 / LMG 1197) (Cupriavidus necator (strain JMP 134)).